A 461-amino-acid chain; its full sequence is tRNA modification GTPase MnmE (461 aa).

(6S)-5-formyl-5,6,7,8-tetrahydrofolate contacts are provided by Arg-22, Glu-87, and Arg-126. Residues 222–382 (GLKTVIVGKP…LEETIFNMVV (161 aa)) form the TrmE-type G domain. Asn-232 is a binding site for K(+). Residues 232–237 (NVGKSS), 251–257 (TDIPGTT), and 276–279 (DTAG) each bind GTP. Ser-236 provides a ligand contact to Mg(2+). The K(+) site is built by Thr-251, Ile-253, and Thr-256. Residue Thr-257 participates in Mg(2+) binding. Lys-461 is a binding site for (6S)-5-formyl-5,6,7,8-tetrahydrofolate.

Belongs to the TRAFAC class TrmE-Era-EngA-EngB-Septin-like GTPase superfamily. TrmE GTPase family. As to quaternary structure, homodimer. Heterotetramer of two MnmE and two MnmG subunits. K(+) serves as cofactor.

It localises to the cytoplasm. Functionally, exhibits a very high intrinsic GTPase hydrolysis rate. Involved in the addition of a carboxymethylaminomethyl (cmnm) group at the wobble position (U34) of certain tRNAs, forming tRNA-cmnm(5)s(2)U34. This Desulforamulus reducens (strain ATCC BAA-1160 / DSM 100696 / MI-1) (Desulfotomaculum reducens) protein is tRNA modification GTPase MnmE.